The following is a 171-amino-acid chain: Calcium channel flower homolog (171 aa).

Residues Met1 to Arg31 are Cytoplasmic-facing. Residues Leu32 to Ile52 form a helical membrane-spanning segment. At His53–Asn56 the chain is on the extracellular side. The helical transmembrane segment at Ile57–Phe77 threads the bilayer. The Cytoplasmic segment spans residues Cys78 to Ala101. The chain crosses the membrane as a helical span at residues Val102–Leu122. The Extracellular portion of the chain corresponds to Gly123 to Asn124. The helical transmembrane segment at Ala125–Lys141 threads the bilayer. Over Lys142–Leu171 the chain is Cytoplasmic.

It belongs to the calcium channel flower family. In terms of assembly, interacts with adaptor protein complex 2 (AP-2). Expressed in neurons in the brain (at protein level). Expressed in neuroblastoma cell lines (at protein level). Expressed in cytotoxic T-lymphoocytes (at protein level). As to expression, low levels of expression in various tissues including the brain, eye, heart, liver and colon. Expression in the heart is at slightly higher levels than isoform 3. Expressed in skin cells. In terms of tissue distribution, very low levels of expression in the brain, liver and eye. Detected at very low levels of expression in skin cells. Expressed in various tissues, with highest levels of expression in the brain and eye. Expressed in skin cells. Low levels of expression in the liver, colon, heart and spleen. As to expression, barely detected in the brain and liver.

The protein localises to the cell membrane. It localises to the vesicle. Functionally, transmembrane protein which mediates synaptic endocytosis and fitness-based cell culling. In response to different stimulus strengths, controls two major modes of synaptic vesicle (SV) retrieval in hippocampal neurons; Clathrin-mediated endocytosis (CME) in response to mild stimulation and activity-dependent bulk endocytosis (ADBE) in response to strong stimulation. In cytotoxic T-lymphoocytes (CTLs) facilitates calcium-dependent endocytosis of cytotoxic granules (CGs) at the immuno synapse. Different isoforms work as fitness fingerprints in 'loser' and 'winner' cells and thereby mediate win/lose decisions as part of the cell competition process. This is Calcium channel flower homolog (Cacfd1) from Mus musculus (Mouse).